The following is a 185-amino-acid chain: MKMIVGLGNIGKEYDKTRHNTGFMVVDELAKKHDINNFKVQSDALIADFRVNGEKVLLVKPTTYMNDSGRAVRPLMDYYDVDLNDMIVAYDDMDMPVGKIRLRQKGSAGGHNGIKSIIAHVGTQSFNRVRVGIDHPTKESVVDYVLGKFRKEQITDFEIGVQNAVAALEDWTTIENFSQLMNKYN.

Tyr-14 contacts tRNA. The active-site Proton acceptor is the His-19. Residues Tyr-64, Asn-66, and Asn-112 each coordinate tRNA.

This sequence belongs to the PTH family. In terms of assembly, monomer.

It localises to the cytoplasm. The catalysed reaction is an N-acyl-L-alpha-aminoacyl-tRNA + H2O = an N-acyl-L-amino acid + a tRNA + H(+). Its function is as follows. Hydrolyzes ribosome-free peptidyl-tRNAs (with 1 or more amino acids incorporated), which drop off the ribosome during protein synthesis, or as a result of ribosome stalling. Functionally, catalyzes the release of premature peptidyl moieties from peptidyl-tRNA molecules trapped in stalled 50S ribosomal subunits, and thus maintains levels of free tRNAs and 50S ribosomes. This is Peptidyl-tRNA hydrolase from Pediococcus pentosaceus (strain ATCC 25745 / CCUG 21536 / LMG 10740 / 183-1w).